The primary structure comprises 500 residues: Anthranilate synthase component 1 (500 aa).

Residues S49 and 276 to 278 (PFM) contribute to the L-tryptophan site. Chorismate is bound at residue 311 to 312 (GT). E338 lines the Mg(2+) pocket. Residues Y426, R446, 460–462 (GGG), and G462 contribute to the chorismate site. E475 contacts Mg(2+).

The protein belongs to the anthranilate synthase component I family. Heterotetramer consisting of two non-identical subunits: a beta subunit (TrpG) and a large alpha subunit (TrpE). Requires Mg(2+) as cofactor.

It carries out the reaction chorismate + L-glutamine = anthranilate + pyruvate + L-glutamate + H(+). The protein operates within amino-acid biosynthesis; L-tryptophan biosynthesis; L-tryptophan from chorismate: step 1/5. Feedback inhibited by tryptophan. Part of a heterotetrameric complex that catalyzes the two-step biosynthesis of anthranilate, an intermediate in the biosynthesis of L-tryptophan. In the first step, the glutamine-binding beta subunit (TrpG) of anthranilate synthase (AS) provides the glutamine amidotransferase activity which generates ammonia as a substrate that, along with chorismate, is used in the second step, catalyzed by the large alpha subunit of AS (TrpE) to produce anthranilate. In the absence of TrpG, TrpE can synthesize anthranilate directly from chorismate and high concentrations of ammonia. This chain is Anthranilate synthase component 1 (trpE), found in Cereibacter sphaeroides (strain ATCC 17023 / DSM 158 / JCM 6121 / CCUG 31486 / LMG 2827 / NBRC 12203 / NCIMB 8253 / ATH 2.4.1.) (Rhodobacter sphaeroides).